The chain runs to 199 residues: ATP-dependent Clp protease proteolytic subunit (199 aa).

Ser98 acts as the Nucleophile in catalysis. Residue His123 is part of the active site.

It belongs to the peptidase S14 family. Fourteen ClpP subunits assemble into 2 heptameric rings which stack back to back to give a disk-like structure with a central cavity, resembling the structure of eukaryotic proteasomes.

The protein resides in the cytoplasm. The catalysed reaction is Hydrolysis of proteins to small peptides in the presence of ATP and magnesium. alpha-casein is the usual test substrate. In the absence of ATP, only oligopeptides shorter than five residues are hydrolyzed (such as succinyl-Leu-Tyr-|-NHMec, and Leu-Tyr-Leu-|-Tyr-Trp, in which cleavage of the -Tyr-|-Leu- and -Tyr-|-Trp bonds also occurs).. Its function is as follows. Cleaves peptides in various proteins in a process that requires ATP hydrolysis. Has a chymotrypsin-like activity. Plays a major role in the degradation of misfolded proteins. In Clostridium botulinum (strain Alaska E43 / Type E3), this protein is ATP-dependent Clp protease proteolytic subunit.